The following is a 457-amino-acid chain: Multidrug resistance protein MdtK (457 aa).

12 consecutive transmembrane segments (helical) span residues 11–31 (LLALGIPVIIAQFSQTAMGVV), 53–73 (IWLPVILFGYGLLLALTPIIA), 93–113 (WLAIFLSIIIIAILYNSKFLI), 127–147 (AVGFIHAIMWGAPGYLFYQVL), 160–180 (GMVISFLGLLINIPINYIFIY), 188–208 (LGGVGCGVATASVYWVMFLLM), 243–263 (LPIAMAVFFEITLFAIVALLI), 280–300 (FSSLMFMFPISLAAATTIRVG), 316–336 (YTGIMVGLVFACLTATFSIIL), 357–377 (LMLFAALYQLSDAIQVVGAGV), 387–407 (IFYITFIAFWILGLPSGYILG), and 418–438 (PQGFWIGFIIGLTASAVMIFA).

Belongs to the multi antimicrobial extrusion (MATE) (TC 2.A.66.1) family. MdtK subfamily.

It localises to the cell inner membrane. Its function is as follows. Multidrug efflux pump that functions probably as a Na(+)/drug antiporter. The sequence is that of Multidrug resistance protein MdtK from Photorhabdus laumondii subsp. laumondii (strain DSM 15139 / CIP 105565 / TT01) (Photorhabdus luminescens subsp. laumondii).